Reading from the N-terminus, the 344-residue chain is MSNAITMGIFWHLIGAASAACFYAPFKKVKKWSWETMWSVGGIVSWIILPWAISALLLPNFWAYYSSFSLSTLLPVFLFGAMWGIGNINYGLTMRYLGMSMGIGIAIGITLIVGTLMTPIINGNFDVLINTEGGRMTLLGVLVALIGVGIVTRAGQLKERKMGIKAEEFNLKKGLVLAVMCGIFSAGMSFAMNAAKPMHEAAAALGVDPLYVALPSYVVIMGGGAIINLGFCFIRLAKVKDLSLKADFSLAKPLIIHNVLLSVLGGLMWYLQFFFYAWGHARIPAQYDYISWMLHMSFYVLCGGIVGLVLKEWNNAGRRPVTVLSLGCVVIIVAANIVGIGMAN.

10 helical membrane-spanning segments follow: residues 4–24 (AITM…CFYA), 38–58 (WSVG…ALLL), 68–88 (FSLS…IGNI), 101–121 (MGIG…TPII), 137–157 (TLLG…AGQL), 175–195 (LVLA…MNAA), 214–234 (LPSY…FCFI), 259–279 (VLLS…YAWG), 290–310 (ISWM…GLVL), and 323–343 (VLSL…IGMA).

Belongs to the L-rhamnose transporter (TC 2.A.7.6) family.

It localises to the cell inner membrane. It catalyses the reaction L-rhamnopyranose(in) + H(+)(in) = L-rhamnopyranose(out) + H(+)(out). Its function is as follows. Uptake of L-rhamnose across the cytoplasmic membrane with the concomitant transport of protons into the cell (symport system). The sequence is that of L-rhamnose-proton symporter from Escherichia coli O1:K1 / APEC.